A 1437-amino-acid polypeptide reads, in one-letter code: MKISKVREENRGAKLTVNAKTAVVSENRSQEGILYNDPSRYGKSRKNDEDRDRYIESRLKSSGKLYRIFNEDKNKRETDELQWFLSEIVKKINRRNGLVLSDMLSVDDRAFEKAFEKYAELSYTNRRNKVSGSPAFETCGVDAATAERLKGIISETNFINRIKNNIDNKVSEDIIDRIIAKYLKKSLCRERVKRGLKKLLMNAFDLPYSDPDIDVQRDFIDYVLEDFYHVRAKSQVSRSIKNMNMPVQPEGDGKFAITVSKGGTESGNKRSAEKEAFKKFLSDYASLDERVRDDMLRRMRRLVVLYFYGSDDSKLSDVNEKFDVWEDHAARRVDNREFIKLPLENKLANGKTDKDAERIRKNTVKELYRNQNIGCYRQAVKAVEEDNNGRYFDDKMLNMFFIHRIEYGVEKIYANLKQVTEFKARTGYLSEKIWKDLINYISIKYIAMGKAVYNYAMDELNASDKKEIELGKISEEYLSGISSFDYELIKAEEMLQRETAVYVAFAARHLSSQTVELDSENSDFLLLKPKGTMDKNDKNKLASNNILNFLKDKETLRDTILQYFGGHSLWTDFPFDKYLAGGKDDVDFLTDLKDVIYSMRNDSFHYATENHNNGKWNKELISAMFEHETERMTVVMKDKFYSNNLPMFYKNDDLKKLLIDLYKDNVERASQVPSFNKVFVRKNFPALVRDKDNLGIELDLKADADKGENELKFYNALYYMFKEIYYNAFLNDKNVRERFITKATKVADNYDRNKERNLKDRIKSAGSDEKKKLREQLQNYIAENDFGQRIKNIVQVNPDYTLAQICQLIMTEYNQQNNGCMQKKSAARKDINKDSYQHYKMLLLVNLRKAFLEFIKENYAFVLKPYKHDLCDKADFVPDFAKYVKPYAGLISRVAGSSELQKWYIVSRFLSPAQANHMLGFLHSYKQYVWDIYRRASETGTEINHSIAEDKIAGVDITDVDAVIDLSVKLCGTISSEISDYFKDDEVYAEYISSYLDFEYDGGNYKDSLNRFCNSDAVNDQKVALYYDGEHPKLNRNIILSKLYGERRFLEKITDRVSRSDIVEYYKLKKETSQYQTKGIFDSEDEQKNIKKFQEMKNIVEFRDLMDYSEIADELQGQLINWIYLRERDLMNFQLGYHYACLNNDSNKQATYVTLDYQGKKNRKINGAILYQICAMYINGLPLYYVDKDSSEWTVSDGKESTGAKIGEFYRYAKSFENTSDCYASGLEIFENISEHDNITELRNYIEHFRYYSSFDRSFLGIYSEVFDRFFTYDLKYRKNVPTILYNILLQHFVNVRFEFVSGKKMIGIDKKDRKIAKEKECARITIREKNGVYSEQFTYKLKNGTVYVDARDKRYLQSIIRLLFYPEKVNMDEMIEVKEKKKPSDNNTGKGYSKRDRQQDRKEYDKYKEKKKKEGNFLSGMGGNINWDEINAQLKN.

HEPN-like fold regions lie at residues 460 to 626 and 1101 to 1437; these read LNAS…AMFE and EFRD…QLKN. The tract at residues 1377 to 1419 is disordered; it reads EVKEKKKPSDNNTGKGYSKRDRQQDRKEYDKYKEKKKKEGNFL. The span at 1394 to 1416 shows a compositional bias: basic and acidic residues; that stretch reads SKRDRQQDRKEYDKYKEKKKKEG.

The protein belongs to the CRISPR-associated endoribonuclease Cas13a family. It depends on a divalent metal cation as a cofactor.

Target RNA acts as an activator for non-specific ssRNA degradation. CRISPR (clustered regularly interspaced short palindromic repeat), is an adaptive immune system that provides protection against mobile genetic elements (viruses, transposable elements and conjugative plasmids). CRISPR clusters contain sequences complementary to antecedent mobile elements and target invading nucleic acids. Unlike many single-component effectors, this CRISPR-Cas system targets RNA. CRISPR clusters are transcribed from pre-CRISPR RNA (crRNA) and processed into crRNA by this protein. Cleaves linear target ssRNA in a pre-crRNA-dependent fashion, preferentially around A residues. Binding a viable target RNA target activates this protein for non-specific RNA degradation in vitro (called collateral RNA degradation), but it is not very sensitive as it requires nanomolar levels of viable target RNA. This Lachnospiraceae bacterium (strain NK4A179) protein is CRISPR-associated endoribonuclease Cas13a.